Reading from the N-terminus, the 503-residue chain is Maturase K (503 aa).

It belongs to the intron maturase 2 family. MatK subfamily.

Its subcellular location is the plastid. It localises to the chloroplast. Functionally, usually encoded in the trnK tRNA gene intron. Probably assists in splicing its own and other chloroplast group II introns. The sequence is that of Maturase K from Rosa canina (Dog rose).